The chain runs to 299 residues: Leucine zipper transcription factor-like protein 1 (299 aa).

A coiled-coil region spans residues 96–299; that stretch reads LKLQTDISEL…KRLAKYESED (204 aa). An interaction with BSS9 region spans residues 145 to 299; it reads GTTELLNKEI…KRLAKYESED (155 aa).

It belongs to the LZTFL1 family. As to quaternary structure, self-associates. Interacts with BBS9; the interaction mediates the association of LZTL1 with the BBsome complex and regulates BBSome ciliary trafficking. In terms of tissue distribution, highly expressed in testis. Expressed in brain, cerebellum, eye, heart, kidney, liver, lung and trachea. In small intestine, graded expression along the crypt-villus axis with high levels in the villus apex and lower levels in the crypt stem cells (at protein level). Not expressed in skeletal muscle and white adipose tissue.

Its subcellular location is the cytoplasm. Regulates ciliary localization of the BBSome complex. Together with the BBSome complex, controls SMO ciliary trafficking and contributes to the sonic hedgehog (SHH) pathway regulation. May play a role in neurite outgrowth. May have tumor suppressor function. In Mus musculus (Mouse), this protein is Leucine zipper transcription factor-like protein 1 (Lztfl1).